The sequence spans 809 residues: Sucrose synthase 2 (809 aa).

A GT-B glycosyltransferase region spans residues 278–756 (MVFNVVILSP…GLQRIYERYT (479 aa)).

It belongs to the glycosyltransferase 1 family. Plant sucrose synthase subfamily.

The enzyme catalyses an NDP-alpha-D-glucose + D-fructose = a ribonucleoside 5'-diphosphate + sucrose + H(+). Its function is as follows. Sucrose-cleaving enzyme that provides UDP-glucose and fructose for various metabolic pathways. This is Sucrose synthase 2 (SUS2) from Pisum sativum (Garden pea).